Reading from the N-terminus, the 185-residue chain is Ethylene-responsive transcription factor ERF017 (185 aa).

A DNA-binding region (AP2/ERF) is located at residues 11–68; sequence KYKGVRKRKWGKWVSEIRLPNSRERIWLGSYDTPEKAARAFDAALYCLRGNNAKFNFP.

It belongs to the AP2/ERF transcription factor family. ERF subfamily.

The protein localises to the nucleus. Probably acts as a transcriptional activator. Binds to the GCC-box pathogenesis-related promoter element. May be involved in the regulation of gene expression by stress factors and by components of stress signal transduction pathways. The polypeptide is Ethylene-responsive transcription factor ERF017 (ERF017) (Arabidopsis thaliana (Mouse-ear cress)).